We begin with the raw amino-acid sequence, 155 residues long: Riboflavin kinase (155 aa).

Residues Gly-15, Lys-21, Thr-27, and Asn-29 each coordinate ATP. Residues Thr-27 and Asn-29 each contribute to the Mg(2+) site. The active-site Nucleophile is the Glu-79. Residues Ile-82, His-84, and Tyr-91 each coordinate ATP. Arg-104, Lys-107, and Phe-109 together coordinate FMN.

As to quaternary structure, monomer. Directly interacts with TNFRSF1A death domain; this interaction may be supported by TRADD. In the absence of TNFRSF1A, interacts with TRADD. Independently of TNFRSF1A, interacts with the NADPH oxidase subunit CYBA. It depends on Zn(2+) as a cofactor. The cofactor is Mg(2+).

Its subcellular location is the cytoplasm. The catalysed reaction is riboflavin + ATP = FMN + ADP + H(+). It functions in the pathway cofactor biosynthesis; FMN biosynthesis; FMN from riboflavin (ATP route): step 1/1. Catalyzes the phosphorylation of riboflavin (vitamin B2) to form flavin-mononucleotide (FMN), hence rate-limiting enzyme in the synthesis of FAD. Essential for TNF-induced reactive oxygen species (ROS) production. Through its interaction with both TNFRSF1A and CYBA, physically and functionally couples TNFRSF1A to NADPH oxidase. TNF-activation of RFK may enhance the incorporation of FAD in NADPH oxidase, a critical step for the assembly and activation of NADPH oxidase. This chain is Riboflavin kinase (Rfk), found in Mus musculus (Mouse).